The sequence spans 211 residues: Probable nicotinate-nucleotide adenylyltransferase (211 aa).

Belongs to the NadD family.

It carries out the reaction nicotinate beta-D-ribonucleotide + ATP + H(+) = deamido-NAD(+) + diphosphate. Its pathway is cofactor biosynthesis; NAD(+) biosynthesis; deamido-NAD(+) from nicotinate D-ribonucleotide: step 1/1. In terms of biological role, catalyzes the reversible adenylation of nicotinate mononucleotide (NaMN) to nicotinic acid adenine dinucleotide (NaAD). The sequence is that of Probable nicotinate-nucleotide adenylyltransferase from Legionella pneumophila (strain Corby).